A 621-amino-acid chain; its full sequence is F-box/LRR-repeat protein 4 (621 aa).

Arg28 is subject to Asymmetric dimethylarginine. The region spanning 277–332 is the F-box domain; it reads NGYFDKLPYELIQLILNHLTLPDLCRLAQTCKLLNQHCCDPLQYIHLNLQPYWAKL. LRR repeat units lie at residues 376–397, 402–421, 427–448, 452–474, 480–501, 504–524, 532–558, 559–583, and 584–609; these read ELVR…EIIS, NLQD…AFSH, GLKR…SILN, DLQH…ASMI, KLRT…AELA, CPLL…STGC, LPNL…ASNC, TRLR…LLES, and CKDL…LSAS.

As to quaternary structure, part of a SCF (SKP1-CUL1-F-box) protein ligase complex. Interacts with FAF2 and VCP. Interacts with PPTC7; this interaction promotes destruction of BNIP3 and NIX and mitophagy suppression.

It localises to the cytoplasm. The protein localises to the nucleus. The protein resides in the mitochondrion outer membrane. In terms of biological role, substrate-recognition component of the mitochondria-localized SCF-FBXL4 ubiquitin E3 ligase complex that plays a role in the restriction of mitophagy by controlling the degradation of BNIP3 and NIX mitophagy receptors. Also rescues mitochondrial injury through reverting hyperactivation of DRP1-mediated mitochondrial fission. The sequence is that of F-box/LRR-repeat protein 4 (FBXL4) from Bos taurus (Bovine).